The chain runs to 266 residues: Putative carbamate hydrolase RutD (266 aa).

Residues 14–115 form the AB hydrolase-1 domain; sequence PVVVLISGLG…TVLVSVNGWL (102 aa).

The protein belongs to the AB hydrolase superfamily. Hydrolase RutD family.

It carries out the reaction carbamate + 2 H(+) = NH4(+) + CO2. Involved in pyrimidine catabolism. May facilitate the hydrolysis of carbamate, a reaction that can also occur spontaneously. The chain is Putative carbamate hydrolase RutD from Escherichia coli O9:H4 (strain HS).